The primary structure comprises 319 residues: Glutamyl-Q tRNA(Asp) synthetase (319 aa).

Residues 23–27 (RFAPS) and glutamate 59 contribute to the L-glutamate site. The short motif at 26-36 (PSPSGPLHAGS) is the 'HIGH' region element. Zn(2+) contacts are provided by cysteine 115, cysteine 117, tyrosine 139, and cysteine 143. L-glutamate-binding residues include tyrosine 197 and arginine 215. Positions 254–258 (KLSKQ) match the 'KMSKS' region motif. Lysine 257 is a binding site for ATP.

The protein belongs to the class-I aminoacyl-tRNA synthetase family. GluQ subfamily. Zn(2+) serves as cofactor.

Catalyzes the tRNA-independent activation of glutamate in presence of ATP and the subsequent transfer of glutamate onto a tRNA(Asp). Glutamate is transferred on the 2-amino-5-(4,5-dihydroxy-2-cyclopenten-1-yl) moiety of the queuosine in the wobble position of the QUC anticodon. The polypeptide is Glutamyl-Q tRNA(Asp) synthetase (Bordetella bronchiseptica (strain ATCC BAA-588 / NCTC 13252 / RB50) (Alcaligenes bronchisepticus)).